A 317-amino-acid chain; its full sequence is Orange carotenoid-binding protein (317 aa).

The region spanning 18 to 169 (ADVVPATIAR…DMGFDTSKLG (152 aa)) is the OCP N-terminal domain. Residues Leu37, Tyr203, and Trp290 each coordinate 3'-hydroxyechinenone.

This sequence belongs to the orange carotenoid-binding protein family. Homodimer. It depends on 3'-hydroxyechinenone as a cofactor. In terms of processing, proteolytically cleaved into a red 16.7 kDa form named red carotenoid-binding protein (RCP) which lacks 15 residues from the N-terminus and approximately 150 residues from the C-terminus.

It is found in the cellular thylakoid membrane. Functionally, acts as a blue-light photoreceptor and photo-protectant. Essential for inhibiting damaged induced by excess blue-green light via a process known as non-photochemical quenching (NPQ). Binding carotenoids improves OCP's intrinsic photoprotectant activity by broadening its absorption spectrum and facilitating the dissipation of absorbed energy. In the dark or dim light the stable inactive form (OCP-O) is orange, upon illumination with blue-green light it converts to a metastable active red form (OCP-R), inducing energy dissipation, quenching cellular fluorescence via NPQ. The chain is Orange carotenoid-binding protein from Limnospira maxima (Arthrospira maxima).